Consider the following 205-residue polypeptide: Pre-rRNA-processing protein TSR2 (205 aa).

The interval serine 144–histidine 205 is disordered. A compositionally biased stretch (acidic residues) spans glycine 152–valine 177.

It belongs to the TSR2 family. As to quaternary structure, interacts with RPS26A.

The protein resides in the cytoplasm. The protein localises to the nucleus. In terms of biological role, required for 20S pre-rRNA processing. This chain is Pre-rRNA-processing protein TSR2, found in Saccharomyces cerevisiae (strain ATCC 204508 / S288c) (Baker's yeast).